The primary structure comprises 1457 residues: Bridge-like lipid transfer protein family member 3B (1457 aa).

Residues 3–94 (GIIKKQILKH…DKVIMEMSTC (92 aa)) form the Chorein N-terminal domain. Disordered regions lie at residues 267-295 (STEQRKSMAPEPTQSSTVTSSAQHVKTPQ) and 409-449 (DRNL…PQPS). Over residues 278–295 (PTQSSTVTSSAQHVKTPQ) the composition is skewed to polar residues. Residues serine 414, serine 418, serine 774, and serine 934 each carry the phosphoserine modification. Disordered regions lie at residues 975-1038 (SEDE…TGKG), 1056-1099 (ASLS…LSVS), and 1145-1183 (SNTSCQSPAESVNTSANTQTCGEASPEAVSTNSEGTQEN). The segment covering 980 to 995 (SGLSHKSGSGEMTSEG) has biased composition (polar residues). Serine 1008 bears the Phosphoserine mark. Residues 1145 to 1180 (SNTSCQSPAESVNTSANTQTCGEASPEAVSTNSEGT) are compositionally biased toward polar residues. The stretch at 1410-1455 (ANFLDITREQLMEENECLRQRLAQAKMELAEAHSARDELLHQMKRM) forms a coiled coil.

Homodimer (via N-terminus). Associates with the Golgi-associated retrograde protein (GARP) complex. Interacts with GARP complex component VPS52. Interacts (via C-terminal coiled-coil domain) with STX6.

The protein resides in the cytoplasm. It is found in the cytosol. Its subcellular location is the early endosome. Functionally, tube-forming lipid transport protein which mediates the transfer of lipids between membranes at organelle contact sites. Required for retrograde traffic of vesicle clusters in the early endocytic pathway to the Golgi complex. This chain is Bridge-like lipid transfer protein family member 3B (Bltp3b), found in Mus musculus (Mouse).